The following is a 150-amino-acid chain: Photosystem II extrinsic protein V (150 aa).

The signal sequence occupies residues methionine 1–alanine 20. Heme c is bound by residues cysteine 50, cysteine 53, histidine 54, and histidine 105.

This sequence belongs to the cytochrome c family. PsbV subfamily. As to quaternary structure, PSII is composed of 1 copy each of membrane proteins PsbA, PsbB, PsbC, PsbD, PsbE, PsbF, PsbH, PsbI, PsbJ, PsbK, PsbL, PsbM, PsbT, PsbY, PsbZ, Psb30/Ycf12, at least 3 peripheral proteins of the oxygen-evolving complex and a large number of cofactors. It forms dimeric complexes. The extrinsic subunits in red algae are PsbO (OEC33), PsbQ', cytochrome c-550 and PsbU. Heme c serves as cofactor.

It localises to the plastid. The protein resides in the chloroplast thylakoid membrane. One of the extrinsic, lumenal subunits of photosystem II (PSII). PSII is a light-driven water plastoquinone oxidoreductase, using light energy to abstract electrons from H(2)O, generating a proton gradient subsequently used for ATP formation. The extrinsic proteins stabilize the structure of photosystem II oxygen-evolving complex (OEC), the ion environment of oxygen evolution and protect the OEC against heat-induced inactivation. The chain is Photosystem II extrinsic protein V from Cyanidioschyzon merolae (strain NIES-3377 / 10D) (Unicellular red alga).